The chain runs to 494 residues: MAPRCWRWWSWSAWPGVRPLPSRSTPTPGFCKKFSTQETTPQICVVGSGPAGFYTAQHLLKHHTRAHVDIYEKQLVPFGLVRFGVAPDHPEVKNVINTFTQTARSDRCAFRGNVVVGRDVSVPELREAYHAVVLSYGAEDHQPLEIPGEELPGVVSARAFVGWYNGLPENQKLAPDLSCDTAVILGQGNVALDVARILLTPPEHLEKTDITEVALGVLRQSRVKTVWIVGRRGPLQVAFTIKELREMIQLPGTQPILDPSDFLGLQDRIKDVPRPRKRLTELLLRTATEKPGVEEAARRALASRAWGLRFFRSPQQVLPTPDGRRVAGIRLAVTRLEGVGESTRAVPTGDVEDLPCGLLLSSVGYKSRPIDPSVPFDPKLGIIPNTEGRVVNAPGLYCSGWVKRGPTGVITTTMTDSFLTSQVLLKDLKAGLLPSGPRPGYTAIQALLSDRGVRPVSFSDWEKLDAEEVARGQGTGKPREKLVDRREMLQLLGH.

The N-terminal 34 residues, 1-34, are a transit peptide targeting the mitochondrion; sequence MAPRCWRWWSWSAWPGVRPLPSRSTPTPGFCKKF. 4 residues coordinate FAD: Ala51, Glu72, Leu80, and Val116. Residues 187 to 190, 231 to 232, and Glu243 contribute to the NADP(+) site; these read QGNV and RR. The residue at position 313 (Ser313) is a Phosphoserine. Residues Trp401 and 408–410 each bind FAD; that span reads GVI. NADP(+) is bound at residue Gly408.

This sequence belongs to the ferredoxin--NADP reductase type 1 family. Monomer. Interacts directly with FDX1. The cofactor is FAD.

Its subcellular location is the mitochondrion inner membrane. The enzyme catalyses 2 reduced [adrenodoxin] + NADP(+) + H(+) = 2 oxidized [adrenodoxin] + NADPH. It carries out the reaction 2 reduced [2Fe-2S]-[ferredoxin] + NADP(+) + H(+) = 2 oxidized [2Fe-2S]-[ferredoxin] + NADPH. The protein operates within steroid metabolism; cholesterol metabolism. Serves as the first electron transfer protein in all the mitochondrial P450 systems including cholesterol side chain cleavage in all steroidogenic tissues, steroid 11-beta hydroxylation in the adrenal cortex, 25-OH-vitamin D3-24 hydroxylation in the kidney, and sterol C-27 hydroxylation in the liver. Also acts as a ferredoxin--NADP(+) reductase essential for coenzyme Q biosynthesis: together with FDX2, transfers the electrons required for the hydroxylation reaction performed by COQ6. This is NADPH:adrenodoxin oxidoreductase, mitochondrial (Fdxr) from Rattus norvegicus (Rat).